The sequence spans 431 residues: Isochorismate synthase MenF (431 aa).

K190 acts as the Proton acceptor in catalysis. Catalysis depends on E240, which acts as the Proton donor. Mg(2+) contacts are provided by E284 and E416.

This sequence belongs to the isochorismate synthase family. Homodimer. Mg(2+) is required as a cofactor.

It carries out the reaction chorismate = isochorismate. Its pathway is quinol/quinone metabolism; 1,4-dihydroxy-2-naphthoate biosynthesis; 1,4-dihydroxy-2-naphthoate from chorismate: step 1/7. It participates in quinol/quinone metabolism; menaquinone biosynthesis. Catalyzes the conversion of chorismate to isochorismate. Can also catalyze the reverse reaction, but with a lower efficiency. The chain is Isochorismate synthase MenF from Escherichia coli (strain K12).